Here is a 301-residue protein sequence, read N- to C-terminus: MSTYPVTLPTKEERHKLFGSVPPIKGTKPTEKDKMIDLQNTPKNFLFALDAVGISNVKHPVVIQDGETTQATIATFELSTSLVQDRKGINMSRLTEQLDQYHNEGWVVTNESLIQFARELAERMEQSEGQLTIRYPWFFTRKAPATGLSGLMNAEVWQTVSVNTETNEATLSVGLTINVTTLCPCSKEISEYSAHNQRGYVTMEASLRDEADDFNWKQELLDAAESNASAPLHPVLKRPDEKRVTEMAYENPRFVEDMVRLIAADLYEMDPIASFFVECRNEETIHQHDAIARITFDKDAQ.

This sequence belongs to the GTP cyclohydrolase IV family.

It carries out the reaction GTP + H2O = 7,8-dihydroneopterin 3'-triphosphate + formate + H(+). It participates in cofactor biosynthesis; 7,8-dihydroneopterin triphosphate biosynthesis; 7,8-dihydroneopterin triphosphate from GTP: step 1/1. In terms of biological role, converts GTP to 7,8-dihydroneopterin triphosphate. The protein is GTP cyclohydrolase FolE2 of Exiguobacterium sibiricum (strain DSM 17290 / CCUG 55495 / CIP 109462 / JCM 13490 / 255-15).